A 238-amino-acid polypeptide reads, in one-letter code: Tabinhibitin 5 (238 aa).

A signal peptide spans 1–23 (MTSILVSRFLLAALVLQYATIDA). Residues 32-34 (RGD) carry the Cell attachment site motif. Positions 67–211 (LSKINDVRDH…KARALLTCNF (145 aa)) constitute an SCP domain.

This sequence belongs to the CRISP family. Expressed in salivary glands.

The protein localises to the secreted. In terms of biological role, inhibits platelet aggregation induced by all agonists tested (ADP, arachidonic acid, the thromboxane A2 analog U46619, thrombin, and snake venom snaclecs (TMVA that activates platelet through GPIB, and stejnulxin that specifically acts through GPVI (GP6))). May act by competing with fibrinogen for binding to glycoprotein IIb/IIIa (ITGA2B/ITGB3). The polypeptide is Tabinhibitin 5 (Tabanus yao (Horsefly)).